Consider the following 293-residue polypeptide: 4-diphosphocytidyl-2-C-methyl-D-erythritol kinase (293 aa).

The active site involves K10. 94-104 (PVSAGLAGGSS) provides a ligand contact to ATP. D136 is an active-site residue.

The protein belongs to the GHMP kinase family. IspE subfamily.

The enzyme catalyses 4-CDP-2-C-methyl-D-erythritol + ATP = 4-CDP-2-C-methyl-D-erythritol 2-phosphate + ADP + H(+). It functions in the pathway isoprenoid biosynthesis; isopentenyl diphosphate biosynthesis via DXP pathway; isopentenyl diphosphate from 1-deoxy-D-xylulose 5-phosphate: step 3/6. In terms of biological role, catalyzes the phosphorylation of the position 2 hydroxy group of 4-diphosphocytidyl-2C-methyl-D-erythritol. This is 4-diphosphocytidyl-2-C-methyl-D-erythritol kinase from Listeria monocytogenes serotype 4b (strain CLIP80459).